The chain runs to 635 residues: Chaperone protein HtpG (635 aa).

The interval 1–337 is a; substrate-binding; that stretch reads MELKMHNVQE…SPDLPLNISR (337 aa). A b region spans residues 338 to 556; the sequence is ETLQNNRVVE…EGAMDLRMER (219 aa). Residues 557 to 635 form a c region; it reads FLREQKQLNY…LNNLLGKISV (79 aa).

Belongs to the heat shock protein 90 family. As to quaternary structure, homodimer.

It is found in the cytoplasm. In terms of biological role, molecular chaperone. Has ATPase activity. The polypeptide is Chaperone protein HtpG (Wolbachia pipientis wMel).